The sequence spans 457 residues: Multidrug resistance protein MdtK (457 aa).

Helical transmembrane passes span 11–31, 53–73, 93–113, 127–147, 160–180, 188–208, 239–259, 277–297, 316–336, 357–377, 387–407, and 418–438; these read LLAL…MGFV, IWLP…PVIA, WLVA…GHII, AIGY…FQVL, GMVI…IFIY, LGGV…YLLM, IAIG…FAVV, ALNF…AATI, RTAI…TIVL, LMLL…GSGV, IFFI…YLLA, and PSGF…MMAL.

It belongs to the multi antimicrobial extrusion (MATE) (TC 2.A.66.1) family. MdtK subfamily.

The protein localises to the cell inner membrane. Functionally, multidrug efflux pump that functions probably as a Na(+)/drug antiporter. This Edwardsiella ictaluri (strain 93-146) protein is Multidrug resistance protein MdtK.